The following is a 765-amino-acid chain: Dipeptidyl peptidase 4 (765 aa).

Over 1–6 (MKTPWK) the chain is Cytoplasmic. A helical; Signal-anchor for type II membrane protein membrane pass occupies residues 7–29 (VLLGLLGLAALITIITVPVVLLN). Residues 30-765 (KGNDAAADSR…HFIKQCFSLP (736 aa)) are Extracellular-facing. N-linked (GlcNAc...) asparagine glycans are attached at residues N84, N91, N149, N178, N228, N280, N320, N330, and N331. Disulfide bonds link C384/C393, C443/C446, and C453/C471. N519 carries N-linked (GlcNAc...) asparagine glycosylation. The active-site Charge relay system is the S629. Residues C648 and C761 are joined by a disulfide bond. N684 carries an N-linked (GlcNAc...) asparagine glycan. Catalysis depends on charge relay system residues D707 and H739.

The protein belongs to the peptidase S9B family. DPPIV subfamily. As to quaternary structure, monomer. Homodimer. Heterodimer with Seprase (FAP). Requires homodimerization for optimal dipeptidyl peptidase activity and T-cell costimulation. Found in a membrane raft complex, at least composed of BCL10, CARD11, DPP4 and IKBKB. Associates with collagen. Interacts with PTPRC; the interaction is enhanced in an interleukin-12-dependent manner in activated lymphocytes. Interacts (extracellular domain) with ADA; does not inhibit its dipeptidyl peptidase activity. Interacts with CAV1 (via the N-terminus); the interaction is direct. Interacts (via cytoplasmic tail) with CARD11 (via PDZ domain); its homodimerization is necessary for interaction with CARD11. Interacts with IGF2R; the interaction is direct. Interacts with GPC3. In terms of processing, the soluble form (Dipeptidyl peptidase 4 soluble form also named SDPP) derives from the membrane form (Dipeptidyl peptidase 4 membrane form also named MDPP) by proteolytic processing. Post-translationally, N- and O-Glycosylated. Phosphorylated. Mannose 6-phosphate residues in the carbohydrate moiety are necessary for interaction with IGF2R in activated T-cells. Mannose 6-phosphorylation is induced during T-cell activation.

The protein localises to the secreted. It localises to the cell membrane. The protein resides in the apical cell membrane. It is found in the cell projection. Its subcellular location is the invadopodium membrane. The protein localises to the lamellipodium membrane. It localises to the cell junction. The protein resides in the membrane raft. It carries out the reaction Release of an N-terminal dipeptide, Xaa-Yaa-|-Zaa-, from a polypeptide, preferentially when Yaa is Pro, provided Zaa is neither Pro nor hydroxyproline.. With respect to regulation, inhibited by GPC3 and diprotin A. Cell surface glycoprotein receptor involved in the costimulatory signal essential for T-cell receptor (TCR)-mediated T-cell activation. Acts as a positive regulator of T-cell coactivation, by binding at least ADA, CAV1, IGF2R, and PTPRC. Its binding to CAV1 and CARD11 induces T-cell proliferation and NF-kappa-B activation in a T-cell receptor/CD3-dependent manner. Its interaction with ADA also regulates lymphocyte-epithelial cell adhesion. In association with FAP is involved in the pericellular proteolysis of the extracellular matrix (ECM), the migration and invasion of endothelial cells into the ECM. May be involved in the promotion of lymphatic endothelial cells adhesion, migration and tube formation. When overexpressed, enhanced cell proliferation, a process inhibited by GPC3. Also acts as a serine exopeptidase with a dipeptidyl peptidase activity that regulates various physiological processes by cleaving peptides in the circulation, including many chemokines, mitogenic growth factors, neuropeptides and peptide hormones. Removes N-terminal dipeptides sequentially from polypeptides having unsubstituted N-termini provided that the penultimate residue is proline. This chain is Dipeptidyl peptidase 4 (DPP4), found in Felis catus (Cat).